We begin with the raw amino-acid sequence, 113 residues long: Large ribosomal subunit protein uL24 (113 aa).

It belongs to the universal ribosomal protein uL24 family. In terms of assembly, part of the 50S ribosomal subunit.

One of two assembly initiator proteins, it binds directly to the 5'-end of the 23S rRNA, where it nucleates assembly of the 50S subunit. In terms of biological role, one of the proteins that surrounds the polypeptide exit tunnel on the outside of the subunit. The polypeptide is Large ribosomal subunit protein uL24 (rplX) (Fusobacterium nucleatum subsp. nucleatum (strain ATCC 25586 / DSM 15643 / BCRC 10681 / CIP 101130 / JCM 8532 / KCTC 2640 / LMG 13131 / VPI 4355)).